A 358-amino-acid polypeptide reads, in one-letter code: Cyclin-dependent kinase 11 (358 aa).

Residues Phe-52 to Phe-336 form the Protein kinase domain. ATP contacts are provided by residues Ile-58–Val-66 and Lys-81. Asp-176 (proton acceptor) is an active-site residue.

Belongs to the protein kinase superfamily. CMGC Ser/Thr protein kinase family. CDC2/CDKX subfamily.

The enzyme catalyses L-seryl-[protein] + ATP = O-phospho-L-seryl-[protein] + ADP + H(+). It catalyses the reaction L-threonyl-[protein] + ATP = O-phospho-L-threonyl-[protein] + ADP + H(+). This chain is Cyclin-dependent kinase 11 (cdk11), found in Dictyostelium discoideum (Social amoeba).